A 445-amino-acid polypeptide reads, in one-letter code: Transcriptional enhancer factor TEF-4 (445 aa).

2 disordered regions span residues 1–47 and 191–217; these read MGDP…VWSP and PPAS…SPPA. The segment covering 25–37 has biased composition (gly residues); that stretch reads EGTGGSEGVGGDG. Residues 38–114 constitute a DNA-binding region (TEA); it reads SPDAEGVWSP…QVLARRKSRE (77 aa). The transcriptional activation stretch occupies residues 172 to 445; sequence WNVPDVKPFS…QYHIYRLVRD (274 aa). Residues 199–216 are compositionally biased toward pro residues; that stretch reads YEPPPALSPLPPPAPSPP.

In terms of assembly, interacts with YAP1 and WWTR1/TAZ. In terms of tissue distribution, highest expression in brain. High levels also found in lung, testis and ovarian follicle cells. Lower levels in heart and spleen.

It localises to the nucleus. In terms of biological role, transcription factor which plays a key role in the Hippo signaling pathway, a pathway involved in organ size control and tumor suppression by restricting proliferation and promoting apoptosis. The core of this pathway is composed of a kinase cascade wherein MST1/MST2, in complex with its regulatory protein SAV1, phosphorylates and activates LATS1/2 in complex with its regulatory protein MOB1, which in turn phosphorylates and inactivates YAP1 oncoprotein and WWTR1/TAZ. Acts by mediating gene expression of YAP1 and WWTR1/TAZ, thereby regulating cell proliferation, migration and epithelial mesenchymal transition (EMT) induction. Binds to the SPH and GT-IIC 'enhansons' (5'-GTGGAATGT-3'). May be involved in the gene regulation of neural development. Binds to the M-CAT motif. This Mus musculus (Mouse) protein is Transcriptional enhancer factor TEF-4 (Tead2).